The primary structure comprises 327 residues: Cobalamin biosynthesis protein CobD (327 aa).

4 helical membrane-spanning segments follow: residues 61-78, 80-102, 160-182, and 300-322; these read MWLT…GLVI, SILP…ILLA, GIVA…YKLI, and AALV…ASLV.

Belongs to the CobD/CbiB family.

It localises to the cell membrane. It functions in the pathway cofactor biosynthesis; adenosylcobalamin biosynthesis. Converts cobyric acid to cobinamide by the addition of aminopropanol on the F carboxylic group. In Brucella suis biovar 1 (strain 1330), this protein is Cobalamin biosynthesis protein CobD.